The sequence spans 141 residues: Large ribosomal subunit protein uL11 (141 aa).

It belongs to the universal ribosomal protein uL11 family. In terms of assembly, part of the ribosomal stalk of the 50S ribosomal subunit. Interacts with L10 and the large rRNA to form the base of the stalk. L10 forms an elongated spine to which L12 dimers bind in a sequential fashion forming a multimeric L10(L12)X complex. Post-translationally, one or more lysine residues are methylated.

Its function is as follows. Forms part of the ribosomal stalk which helps the ribosome interact with GTP-bound translation factors. This is Large ribosomal subunit protein uL11 from Helicobacter pylori (strain P12).